A 130-amino-acid polypeptide reads, in one-letter code: Ribosome-binding factor A (130 aa).

This sequence belongs to the RbfA family. In terms of assembly, monomer. Binds 30S ribosomal subunits, but not 50S ribosomal subunits or 70S ribosomes.

It is found in the cytoplasm. In terms of biological role, one of several proteins that assist in the late maturation steps of the functional core of the 30S ribosomal subunit. Associates with free 30S ribosomal subunits (but not with 30S subunits that are part of 70S ribosomes or polysomes). Required for efficient processing of 16S rRNA. May interact with the 5'-terminal helix region of 16S rRNA. This chain is Ribosome-binding factor A, found in Roseiflexus castenholzii (strain DSM 13941 / HLO8).